The following is a 446-amino-acid chain: Methionine aminopeptidase 2-3 (446 aa).

The tract at residues 14–116 (ITDAGANGAD…ENRYRTTSEE (103 aa)) is disordered. A compositionally biased stretch (basic residues) spans 61 to 76 (AKKKKNKKRKPKKKQP). Polar residues predominate over residues 86 to 96 (PLSQLFPNNSY). Over residues 98-116 (KGEEVEYKDENRYRTTSEE) the composition is skewed to basic and acidic residues. Residue H199 participates in substrate binding. Positions 219, 230, and 299 each coordinate a divalent metal cation. H307 contacts substrate. A divalent metal cation is bound by residues E332 and E427.

It belongs to the peptidase M24A family. Methionine aminopeptidase eukaryotic type 2 subfamily. Co(2+) serves as cofactor. It depends on Zn(2+) as a cofactor. Requires Mn(2+) as cofactor. Fe(2+) is required as a cofactor.

Its subcellular location is the cytoplasm. It carries out the reaction Release of N-terminal amino acids, preferentially methionine, from peptides and arylamides.. In terms of biological role, cotranslationally removes the N-terminal methionine from nascent proteins. The N-terminal methionine is often cleaved when the second residue in the primary sequence is small and uncharged (Met-Ala-, Cys, Gly, Pro, Ser, Thr, or Val). This Aspergillus fumigatus (strain CBS 144.89 / FGSC A1163 / CEA10) (Neosartorya fumigata) protein is Methionine aminopeptidase 2-3.